We begin with the raw amino-acid sequence, 154 residues long: Protein phosphatase 1 regulatory subunit 27 (154 aa).

ANK repeat units lie at residues 63-92 (SGLA…DIHQ) and 96-125 (AGWT…DRDA).

Interacts with DYSF and PPP1CA.

Its function is as follows. Inhibits phosphatase activity of protein phosphatase 1 (PP1) complexes. In Homo sapiens (Human), this protein is Protein phosphatase 1 regulatory subunit 27 (PPP1R27).